The following is a 321-amino-acid chain: Phosphate metabolism protein 8 (321 aa).

The protein belongs to the SSM1 family.

Its function is as follows. May be involved in phosphate metabolism. This chain is Phosphate metabolism protein 8 (PHM8), found in Saccharomyces cerevisiae (strain ATCC 204508 / S288c) (Baker's yeast).